A 175-amino-acid polypeptide reads, in one-letter code: Large ribosomal subunit protein uL10 (175 aa).

This sequence belongs to the universal ribosomal protein uL10 family. As to quaternary structure, part of the ribosomal stalk of the 50S ribosomal subunit. The N-terminus interacts with L11 and the large rRNA to form the base of the stalk. The C-terminus forms an elongated spine to which L12 dimers bind in a sequential fashion forming a multimeric L10(L12)X complex.

In terms of biological role, forms part of the ribosomal stalk, playing a central role in the interaction of the ribosome with GTP-bound translation factors. This chain is Large ribosomal subunit protein uL10, found in Methylobacterium sp. (strain 4-46).